The following is an 868-amino-acid chain: DNA mismatch repair protein MutS (868 aa).

G621–S628 lines the ATP pocket. The interval L803–P852 is disordered. A compositionally biased stretch (pro residues) spans P823 to E832.

The protein belongs to the DNA mismatch repair MutS family.

Its function is as follows. This protein is involved in the repair of mismatches in DNA. It is possible that it carries out the mismatch recognition step. This protein has a weak ATPase activity. This chain is DNA mismatch repair protein MutS, found in Halorhodospira halophila (strain DSM 244 / SL1) (Ectothiorhodospira halophila (strain DSM 244 / SL1)).